The primary structure comprises 225 residues: ATP-dependent dethiobiotin synthetase BioD (225 aa).

Position 12–17 (Gly-12–Val-17) interacts with ATP. A Mg(2+)-binding site is contributed by Thr-16. Residue Lys-37 is part of the active site. Residue Thr-41 participates in substrate binding. Residues Asp-46, Glu-105–Gly-108, Gly-166–Ser-167, and Pro-196–Gly-198 contribute to the ATP site. The Mg(2+) site is built by Asp-46 and Glu-105.

Belongs to the dethiobiotin synthetase family. As to quaternary structure, homodimer. It depends on Mg(2+) as a cofactor.

It is found in the cytoplasm. The enzyme catalyses (7R,8S)-7,8-diammoniononanoate + CO2 + ATP = (4R,5S)-dethiobiotin + ADP + phosphate + 3 H(+). Its pathway is cofactor biosynthesis; biotin biosynthesis; biotin from 7,8-diaminononanoate: step 1/2. In terms of biological role, catalyzes a mechanistically unusual reaction, the ATP-dependent insertion of CO2 between the N7 and N8 nitrogen atoms of 7,8-diaminopelargonic acid (DAPA, also called 7,8-diammoniononanoate) to form a ureido ring. This is ATP-dependent dethiobiotin synthetase BioD from Mycobacteroides abscessus (strain ATCC 19977 / DSM 44196 / CCUG 20993 / CIP 104536 / JCM 13569 / NCTC 13031 / TMC 1543 / L948) (Mycobacterium abscessus).